A 320-amino-acid polypeptide reads, in one-letter code: MPVTVTRTTITTTTSSSTTVGSARALTQPLGLLRLLQLISTCVAFSLVASVGAWTGPMGNWAMFTWCFCFAVTLIILIVELGGLQAHFPLSWRNFPITFACYAALFCLSSSIIYPTTYVQFLAHGRTRDHAIAATTFSCVACLAYATEVAWTRARPGEITGYMATVPGLLKVFETFVACIIFAFISEPLLYNQKPALEWCVAVYAICFILAGVTILLNLGDCTNVLPIPFPTFLSGLALLSVLFYATAIVLWPLYQFDQRYQGQPRRSMDPSCTRSISYIQPNTVCFWDRRLAVSILTGINLLAYVSDLVYSTRLVFVKV.

2 consecutive MARVEL domains span residues 25–157 (ALTQ…ARPG) and 162–317 (YMAT…RLVF). The next 8 helical transmembrane spans lie at 35–55 (LLQLISTCVAFSLVASVGAWT), 61–81 (WAMFTWCFCFAVTLIILIVEL), 95–115 (FPITFACYAALFCLSSSIIYP), 131–151 (AIAATTFSCVACLAYATEVAW), 165–185 (TVPGLLKVFETFVACIIFAFI), 197–217 (LEWCVAVYAICFILAGVTILL), 233–253 (FLSGLALLSVLFYATAIVLWP), and 292–312 (LAVSILTGINLLAYVSDLVYS).

Belongs to the MAL family.

It localises to the membrane. The chain is Myeloid-associated differentiation marker (Myadm) from Mus musculus (Mouse).